We begin with the raw amino-acid sequence, 160 residues long: Ribosomal RNA large subunit methyltransferase H (160 aa).

Positions 76 and 108 each coordinate S-adenosyl-L-methionine.

Belongs to the RNA methyltransferase RlmH family. In terms of assembly, homodimer.

The protein resides in the cytoplasm. The enzyme catalyses pseudouridine(1915) in 23S rRNA + S-adenosyl-L-methionine = N(3)-methylpseudouridine(1915) in 23S rRNA + S-adenosyl-L-homocysteine + H(+). Functionally, specifically methylates the pseudouridine at position 1915 (m3Psi1915) in 23S rRNA. In Rhodopseudomonas palustris (strain TIE-1), this protein is Ribosomal RNA large subunit methyltransferase H.